We begin with the raw amino-acid sequence, 957 residues long: MAPTAVFSNPATNPVANLKASVKTAEGVPATLNDLLLQATEMYPSHELSFITSSAHDSSVQARTFQDFNQRVRNLASALAAWKKPAGEVVVVYLTEHEDNMSAVWACLLAGLVPCLQPALSAQQEHKEGHIAHIRKLFGSATWLTNDAGAMQLDTIKGLDVHLFSDLLASAEKSSVAANYVARQSQPDDEAILFLTSGSTGFSKAVVHTHRTIINACIAKGANYRLTPQTNILNWVGFDHVAGSLEMHIAPLLYGCSQLHVHASAILSDPLLLLRLIDERSIDIAFAPNFLLAKMVRDLEKRTDLHGKFDLSSLRRMNSGGEAVVSKTAVAFVQLLKKLGRNPSKVSFKVAAGFGMTETCAGCIYDVVDLAENSPKHEFLALGAPVHGCEMRIVDPEDGATPRSDGQPGELQVRGPMIFVRYYNNPEATKSSFVEGGWYRTGDIGIIENGNMRLSGRIKDTVIVHGVSYGIPELETYLQTVQGVTHSFLAAAPYRAPGQETEGFVVFYAPTFDLQGDDASKKLSETHRAIKDVSVKMMTLPPQHIVPIPMDQMEKTTLGKLSRARLLSQFVQGALAKHVARAEELISMARGASFVTPSTDDEKALAAIYAGIFNLQSNEVSARDNFFELGGTSIDVIRLKREGEAHFGLSEIPIIQILKNPIVSDLAKYVNGLVNNDASANEYDPIVPLQLSGDKTPIFFVHPGVGEVLIFVNLAKYFQNERPFYAFRARGFEPGHPFFGSMDEMVTSYANAMKKTQPKGPYAIAGYSYGGVVAFEVAKRLESMGEEVKFVGLINIPPHIADRMHEIDWTGGMLNLAYFLSLVTKQDATDLHPKLKTMTKEEQLEVVWKLAPPERVTELQLTPGKLDHWVSIAGSLIECGKSYNPGGNVSAVDVFYAIPLKGSKEDWLNKQLKPWSQFSRGEPQFIDVPGQHYTLMDFDHVPQFQKIFRGRLEARGL.

Residues 59-464 (SVQARTFQDF…SGRIKDTVIV (406 aa)) form an adenylation (A) domain region. Positions 596 to 674 (TPSTDDEKAL…DLAKYVNGLV (79 aa)) constitute a Carrier domain. The thiolation and peptide carrier (T) domain stretch occupies residues 601 to 671 (DEKALAAIYA…IVSDLAKYVN (71 aa)). S633 carries the O-(pantetheine 4'-phosphoryl)serine modification. Residues 697-947 (PIFFVHPGVG…FDHVPQFQKI (251 aa)) form a thioesterase (TE) domain region.

Belongs to the ATP-dependent AMP-binding enzyme family.

It participates in secondary metabolite biosynthesis. The L-tyrosine:2-oxoglutarate aminotransferase atrD and the atromentin synthetase atrA catalyze consecutive steps to turn over L-tyrosine into atromentin, which represents the generic precursor molecule for the entire terphenylquinone and pulvinic acid family of pigments, which are widely distributed secondary metabolites in homobasidiomycetes. The first step is catalyzed by atrD which converts L-tyrosine in to 4-hydroxyphenylpyruvate (4-HPP). Adenylation of two 4-HPP monomers by the atrA adenylation (A) domain, ester bond formation between monomers and atrA, and symmetric C-C-bond formation between two monomers by atrA leads to atromentin. This Tapinella panuoides (Oyster rollrim mushroom) protein is Atromentin synthetase.